An 813-amino-acid polypeptide reads, in one-letter code: DNA gyrase subunit A (813 aa).

The 467-residue stretch at 38 to 504 (LPDVRDGLKP…EIEYLDVEDF (467 aa)) folds into the Topo IIA-type catalytic domain. Y126 acts as the O-(5'-phospho-DNA)-tyrosine intermediate in catalysis. The GyrA-box signature appears at 531-537 (QNRGGKG).

The protein belongs to the type II topoisomerase GyrA/ParC subunit family. As to quaternary structure, heterotetramer, composed of two GyrA and two GyrB chains. In the heterotetramer, GyrA contains the active site tyrosine that forms a transient covalent intermediate with DNA, while GyrB binds cofactors and catalyzes ATP hydrolysis.

It is found in the cytoplasm. The catalysed reaction is ATP-dependent breakage, passage and rejoining of double-stranded DNA.. A type II topoisomerase that negatively supercoils closed circular double-stranded (ds) DNA in an ATP-dependent manner to modulate DNA topology and maintain chromosomes in an underwound state. Negative supercoiling favors strand separation, and DNA replication, transcription, recombination and repair, all of which involve strand separation. Also able to catalyze the interconversion of other topological isomers of dsDNA rings, including catenanes and knotted rings. Type II topoisomerases break and join 2 DNA strands simultaneously in an ATP-dependent manner. The chain is DNA gyrase subunit A from Treponema pallidum (strain Nichols).